The sequence spans 450 residues: Methylenetetrahydrofolate--tRNA-(uracil-5-)-methyltransferase TrmFO (450 aa).

9-14 (GGGMAG) provides a ligand contact to FAD.

It belongs to the MnmG family. TrmFO subfamily. The cofactor is FAD.

The protein localises to the cytoplasm. It carries out the reaction uridine(54) in tRNA + (6R)-5,10-methylene-5,6,7,8-tetrahydrofolate + NADH + H(+) = 5-methyluridine(54) in tRNA + (6S)-5,6,7,8-tetrahydrofolate + NAD(+). The enzyme catalyses uridine(54) in tRNA + (6R)-5,10-methylene-5,6,7,8-tetrahydrofolate + NADPH + H(+) = 5-methyluridine(54) in tRNA + (6S)-5,6,7,8-tetrahydrofolate + NADP(+). Catalyzes the folate-dependent formation of 5-methyl-uridine at position 54 (M-5-U54) in all tRNAs. The polypeptide is Methylenetetrahydrofolate--tRNA-(uracil-5-)-methyltransferase TrmFO (Roseobacter denitrificans (strain ATCC 33942 / OCh 114) (Erythrobacter sp. (strain OCh 114))).